A 1113-amino-acid chain; its full sequence is Coiled-coil domain-containing protein 158 (1113 aa).

Polar residues predominate over residues 1-14 (MESKAWESNNEDLL). The disordered stretch occupies residues 1-26 (MESKAWESNNEDLLSSSGVTSNGGSS). The span at 15-26 (SSSGVTSNGGSS) shows a compositional bias: low complexity. Coiled coils occupy residues 72-183 (GKEH…LSHE) and 243-833 (VEDQ…QEQE). Disordered regions lie at residues 848–902 (LQGP…DPTR) and 955–1062 (CHRS…IETT). 5 stretches are compositionally biased toward polar residues: residues 867-894 (ASVTRSHSNVPSSQSTASFLSHHSTKAN), 955-974 (CHRSNNSLRDSTEGSKSSET), 994-1017 (FTFTSAASPSVKNSASRSFNSSPK), 1024-1040 (LLTSSVEGSIGSTSQYR), and 1053-1062 (DSQSPPIETT). Residues 1061–1113 (TTGKTCRKLQNRLESLQTLVEDLQLKNQAMSSMIRNQEKRIQKVKDQEKMLLK) are a coiled coil.

In Homo sapiens (Human), this protein is Coiled-coil domain-containing protein 158 (CCDC158).